A 30-amino-acid polypeptide reads, in one-letter code: Agglutinin alpha-1 chain (30 aa).

One can recognise a Jacalin-type lectin domain in the interval 1–30 (GVAFDDGSYTGIREINFEYNRETAIGGXQV).

This sequence belongs to the jacalin lectin family. In terms of assembly, tetramer of four alpha chains associated with two or four beta chains.

Functionally, N-acetyl-galactosamine and D-galactose specific lectin. Binds the Tn-antigen structure GalNAc-alpha-1-O-Ser, the T-antigen structure Gal-beta1-3-GalNAc and IgA. The sequence is that of Agglutinin alpha-1 chain from Morus nigra (Black mulberry).